The sequence spans 703 residues: MGFNIERADKPFVVKSPYKPSGDQPQAIAELAERIENGENDVVLMGATGTGKTATTAWLIEKLQRPTLIIEPNKTLAAQLCAEFRELMPDNAVSYFVSYYDYYQPEAYIPQTDTYIEKDSNINDDVERLRHQATANLLTRRDCVVVATVSCIYGLGTPEEYAGRMLFLKVGQEINRDDLLRQFVAMQYKRNDIAFTRGTFRVRGDTVEIIPVYEELAVRIEFFGDEIDRISTLHPLTGDEIDEENEVHIFPASHYVAGPERMERALKTIREELEERLAELRKQGKELEAQRLNMRTTYDLEMLTQVGVCSGVENYSRHFDGRAAGTPPHTLLDFFPDDFLLVIDESHVTVPQIGAMYEGDASRKRTLVEHGFRLPSAMDNRPLKWPEFLQRVGQTVYLSATPGDYEMGLSDGVVEQIIRPTGLLDPKIDVRPVKGQIDDLLAEIKARVAKNERALVTTLTKKMAEDLTDYLLERGIKVEYLHSDVDTLRRVELLRMLREGKIDVIVGINLLREGLDLPEVSLVAILDADKEGFLRSYRSLIQTIGRAARNVSGTVIMYADETTEAMRQAIDETDRRRAKQIAYNQEHGIDPKPLIKKISDVNDMLAKEDVDTQTLLEGGYRNAGKAGNTHLGVPVLDPNEADKRHEEILKAGLPAQDLADLIRQLSEQMHTAAEQLQFELAARLRDEIRDLKKELRQMTEANK.

One can recognise a Helicase ATP-binding domain in the interval 33–419 (ERIENGENDV…SDGVVEQIIR (387 aa)). 46–53 (GATGTGKT) contacts ATP. A Beta-hairpin motif is present at residues 99-122 (YYDYYQPEAYIPQTDTYIEKDSNI). Positions 436–589 (QIDDLLAEIK…QIAYNQEHGI (154 aa)) constitute a Helicase C-terminal domain. The UVR domain maps to 659–694 (ADLIRQLSEQMHTAAEQLQFELAARLRDEIRDLKKE).

Belongs to the UvrB family. Forms a heterotetramer with UvrA during the search for lesions. Interacts with UvrC in an incision complex.

It is found in the cytoplasm. In terms of biological role, the UvrABC repair system catalyzes the recognition and processing of DNA lesions. A damage recognition complex composed of 2 UvrA and 2 UvrB subunits scans DNA for abnormalities. Upon binding of the UvrA(2)B(2) complex to a putative damaged site, the DNA wraps around one UvrB monomer. DNA wrap is dependent on ATP binding by UvrB and probably causes local melting of the DNA helix, facilitating insertion of UvrB beta-hairpin between the DNA strands. Then UvrB probes one DNA strand for the presence of a lesion. If a lesion is found the UvrA subunits dissociate and the UvrB-DNA preincision complex is formed. This complex is subsequently bound by UvrC and the second UvrB is released. If no lesion is found, the DNA wraps around the other UvrB subunit that will check the other stand for damage. This is UvrABC system protein B from Bifidobacterium longum (strain NCC 2705).